A 736-amino-acid chain; its full sequence is Gephyrin (736 aa).

The interval 14-166 is MPT Mo-transferase; that stretch reads QIRVGVLTVS…FILPALPHAI (153 aa). The interaction with GABARAP stretch occupies residues 140-316; the sequence is LIINLPGSKK…VDITKVARRH (177 aa). 2 disordered regions span residues 181-232 and 260-290; these read DELE…DSSS and TASL…PKVQ. The span at 187-199 shows a compositional bias: pro residues; it reads PSPPPPLSPPPTT. 2 positions are modified to phosphoserine: S188 and S194. T198 bears the Phosphothreonine mark. Residue S200 is modified to Phosphoserine. C212 carries S-palmitoyl cysteine lipidation. Residues 261-290 show a composition bias toward polar residues; the sequence is ASLSTTPSESPRAQATSRLSTASCPTPKVQ. S262 carries the post-translational modification Phosphoserine. Phosphothreonine occurs at positions 265 and 266. Residues S268 and S270 each carry the phosphoserine modification. C284 carries the S-palmitoyl cysteine lipid modification. S305 is subject to Phosphoserine. Positions 326–736 are MPT adenylyltransferase; sequence MDKAFITVLE…VVDVMVIGRL (411 aa).

The protein in the N-terminal section; belongs to the MoaB/Mog family. In the C-terminal section; belongs to the MoeA family. In terms of assembly, homotrimer, homodimer and homooligomer. Interacts with GABARAP. Interacts with SRGAP2 (via SH3 domain). Interacts with GABRA3. Interacts with GLRB. GABRA3 and GLRB occupy overlapping binding sites. Interacts with ARHGAP32; IQSEC3, INSYN1 and INSYN2A. Mg(2+) serves as cofactor. Palmitoylated. Palmitoylation is stimulated by GABA type A receptors activity. Palmitoylation by ZDHHC12 regulates clustering at synapses.

It localises to the postsynaptic cell membrane. The protein resides in the cell membrane. Its subcellular location is the cytoplasm. It is found in the cytosol. The protein localises to the cytoskeleton. It localises to the cell projection. The protein resides in the dendrite. Its subcellular location is the postsynaptic density. The enzyme catalyses molybdopterin + ATP + H(+) = adenylyl-molybdopterin + diphosphate. It catalyses the reaction adenylyl-molybdopterin + molybdate = Mo-molybdopterin + AMP + H(+). It participates in cofactor biosynthesis; molybdopterin biosynthesis. Inhibited by copper and tungsten. Microtubule-associated protein involved in membrane protein-cytoskeleton interactions. It is thought to anchor the inhibitory glycine receptor (GLYR) to subsynaptic microtubules. Acts as a major instructive molecule at inhibitory synapses, where it also clusters GABA type A receptors. Its function is as follows. Also has a catalytic activity and catalyzes two steps in the biosynthesis of the molybdenum cofactor. In the first step, molybdopterin is adenylated. Subsequently, molybdate is inserted into adenylated molybdopterin and AMP is released. The protein is Gephyrin of Homo sapiens (Human).